Here is a 140-residue protein sequence, read N- to C-terminus: Large ribosomal subunit protein bL17 (140 aa).

This sequence belongs to the bacterial ribosomal protein bL17 family. Part of the 50S ribosomal subunit. Contacts protein L32.

The sequence is that of Large ribosomal subunit protein bL17 from Rhizorhabdus wittichii (strain DSM 6014 / CCUG 31198 / JCM 15750 / NBRC 105917 / EY 4224 / RW1) (Sphingomonas wittichii).